Reading from the N-terminus, the 332-residue chain is Glycerol-3-phosphate dehydrogenase [NAD(P)+] (332 aa).

Residues Ser-11, Phe-12, Lys-32, and Lys-106 each coordinate NADPH. Sn-glycerol 3-phosphate-binding residues include Lys-106, Gly-137, and Ser-139. Ala-141 serves as a coordination point for NADPH. Positions 192, 245, 255, 256, and 257 each coordinate sn-glycerol 3-phosphate. Lys-192 functions as the Proton acceptor in the catalytic mechanism. An NADPH-binding site is contributed by Arg-256. 2 residues coordinate NADPH: Val-280 and Glu-282.

Belongs to the NAD-dependent glycerol-3-phosphate dehydrogenase family.

It is found in the cytoplasm. It catalyses the reaction sn-glycerol 3-phosphate + NAD(+) = dihydroxyacetone phosphate + NADH + H(+). It carries out the reaction sn-glycerol 3-phosphate + NADP(+) = dihydroxyacetone phosphate + NADPH + H(+). It participates in membrane lipid metabolism; glycerophospholipid metabolism. Its function is as follows. Catalyzes the reduction of the glycolytic intermediate dihydroxyacetone phosphate (DHAP) to sn-glycerol 3-phosphate (G3P), the key precursor for phospholipid synthesis. This chain is Glycerol-3-phosphate dehydrogenase [NAD(P)+], found in Staphylococcus aureus (strain Mu3 / ATCC 700698).